Reading from the N-terminus, the 161-residue chain is Regulator of ribonuclease activity A (161 aa).

Belongs to the RraA family. Homotrimer. Binds to both RNA-binding sites in the C-terminal region of Rne and to RhlB.

It is found in the cytoplasm. Globally modulates RNA abundance by binding to RNase E (Rne) and regulating its endonucleolytic activity. Can modulate Rne action in a substrate-dependent manner by altering the composition of the degradosome. Modulates RNA-binding and helicase activities of the degradosome. This Edwardsiella ictaluri (strain 93-146) protein is Regulator of ribonuclease activity A.